Here is a 345-residue protein sequence, read N- to C-terminus: Annexin A9 (345 aa).

Annexin repeat units lie at residues 41–112 (FSAD…ALLQ), 113–184 (PAAH…ALAK), 197–266 (NLAA…NLAS), and 270–341 (NTPL…ALCR).

This sequence belongs to the annexin family. Homodimer.

Its function is as follows. May act as a low affinity receptor for acetylcholine. The sequence is that of Annexin A9 (ANXA9) from Bos taurus (Bovine).